The primary structure comprises 224 residues: Germin-like protein 8-9 (224 aa).

The signal sequence occupies residues 1–22 (MASPSFCLFAALLALVSWQAIA). An intrachain disulfide couples Cys-32 to Cys-47. The region spanning 62 to 212 (AMLDTPRKTN…AFQVGKGTID (151 aa)) is the Cupin type-1 domain. An N-linked (GlcNAc...) asparagine glycan is attached at Asn-76. His-109, His-111, and Glu-116 together coordinate Mn(2+). Residue Asn-135 is glycosylated (N-linked (GlcNAc...) asparagine). His-157 lines the Mn(2+) pocket.

It belongs to the germin family. As to quaternary structure, oligomer (believed to be a pentamer but probably hexamer).

It is found in the secreted. The protein localises to the extracellular space. Its subcellular location is the apoplast. Plays a role in broad-spectrum disease resistance. Probably has no oxalate oxidase activity even if the active site is conserved. The sequence is that of Germin-like protein 8-9 from Oryza sativa subsp. japonica (Rice).